We begin with the raw amino-acid sequence, 86 residues long: Putative membrane protein insertion efficiency factor (86 aa).

Belongs to the UPF0161 family.

The protein localises to the cell inner membrane. Functionally, could be involved in insertion of integral membrane proteins into the membrane. This Mannheimia succiniciproducens (strain KCTC 0769BP / MBEL55E) protein is Putative membrane protein insertion efficiency factor.